A 358-amino-acid polypeptide reads, in one-letter code: Phospho-N-acetylmuramoyl-pentapeptide-transferase (358 aa).

The next 10 helical transmembrane spans lie at 26–46 (TIYA…WIIR), 71–91 (TPTM…LLWA), 93–113 (LTNV…LIGF), 134–154 (MFWQ…TPGF), 170–190 (LGIF…NAVN), 197–217 (GLAI…AYVA), 234–254 (AGEL…FLWF), 261–281 (VFMG…IAVL), 286–306 (ILLV…IFQV), and 335–355 (KIIV…ISTL).

The protein belongs to the glycosyltransferase 4 family. MraY subfamily. Mg(2+) is required as a cofactor.

Its subcellular location is the cell inner membrane. It catalyses the reaction UDP-N-acetyl-alpha-D-muramoyl-L-alanyl-gamma-D-glutamyl-meso-2,6-diaminopimeloyl-D-alanyl-D-alanine + di-trans,octa-cis-undecaprenyl phosphate = di-trans,octa-cis-undecaprenyl diphospho-N-acetyl-alpha-D-muramoyl-L-alanyl-D-glutamyl-meso-2,6-diaminopimeloyl-D-alanyl-D-alanine + UMP. It functions in the pathway cell wall biogenesis; peptidoglycan biosynthesis. Catalyzes the initial step of the lipid cycle reactions in the biosynthesis of the cell wall peptidoglycan: transfers peptidoglycan precursor phospho-MurNAc-pentapeptide from UDP-MurNAc-pentapeptide onto the lipid carrier undecaprenyl phosphate, yielding undecaprenyl-pyrophosphoryl-MurNAc-pentapeptide, known as lipid I. This chain is Phospho-N-acetylmuramoyl-pentapeptide-transferase, found in Trichlorobacter lovleyi (strain ATCC BAA-1151 / DSM 17278 / SZ) (Geobacter lovleyi).